The sequence spans 293 residues: uncharacterized protein (293 aa).

A coiled-coil region spans residues 65–89 (LQKYLENIKNKKLNLNKQSNNQTNN). Positions 81–112 (KQSNNQTNNQTNNQTNNQTNNQTNNIRPQINN) are disordered.

Its subcellular location is the virion. This is an uncharacterized protein from Acanthamoeba polyphaga mimivirus (APMV).